The chain runs to 255 residues: Hydroxyacylglutathione hydrolase (255 aa).

Zn(2+)-binding residues include His55, His57, Asp59, His60, His111, Asp131, and His169.

Belongs to the metallo-beta-lactamase superfamily. Glyoxalase II family. In terms of assembly, monomer. Requires Zn(2+) as cofactor.

It catalyses the reaction an S-(2-hydroxyacyl)glutathione + H2O = a 2-hydroxy carboxylate + glutathione + H(+). Its pathway is secondary metabolite metabolism; methylglyoxal degradation; (R)-lactate from methylglyoxal: step 2/2. Its function is as follows. Thiolesterase that catalyzes the hydrolysis of S-D-lactoyl-glutathione to form glutathione and D-lactic acid. This chain is Hydroxyacylglutathione hydrolase, found in Chromohalobacter salexigens (strain ATCC BAA-138 / DSM 3043 / CIP 106854 / NCIMB 13768 / 1H11).